Consider the following 282-residue polypeptide: Pantothenate synthetase (282 aa).

31 to 38 (MGYLHEGH) contributes to the ATP binding site. His-38 functions as the Proton donor in the catalytic mechanism. Gln-62 contacts (R)-pantoate. Gln-62 lines the beta-alanine pocket. Residue 148 to 151 (GEKD) coordinates ATP. Position 154 (Gln-154) interacts with (R)-pantoate. ATP-binding positions include Val-177 and 185–188 (YSSR).

This sequence belongs to the pantothenate synthetase family. Homodimer.

It is found in the cytoplasm. The catalysed reaction is (R)-pantoate + beta-alanine + ATP = (R)-pantothenate + AMP + diphosphate + H(+). Its pathway is cofactor biosynthesis; (R)-pantothenate biosynthesis; (R)-pantothenate from (R)-pantoate and beta-alanine: step 1/1. Its function is as follows. Catalyzes the condensation of pantoate with beta-alanine in an ATP-dependent reaction via a pantoyl-adenylate intermediate. This is Pantothenate synthetase from Aquifex aeolicus (strain VF5).